A 313-amino-acid chain; its full sequence is Non-functional target of rapamycin complex subunit LST8-2 (313 aa).

WD repeat units follow at residues 1–35 (MFEN…CYFS), 38–76 (YPDL…PHIP), 82–121 (SHTK…CQRE), 123–162 (RSVS…CSCE), 166–205 (EVGT…QTMT), 215–255 (AHNS…LEKV), and 258–297 (GHER…EEMV).

This sequence belongs to the WD repeat LST8 family.

Its function is as follows. Probable non-functional protein. The protein is Non-functional target of rapamycin complex subunit LST8-2 of Arabidopsis thaliana (Mouse-ear cress).